The following is an 815-amino-acid chain: Phenylalanine--tRNA ligase beta subunit (815 aa).

Positions 39-148 (SKELQKFEVA…KDAVVGDNFT (110 aa)) constitute a tRNA-binding domain. The region spanning 421–496 (PQKKPLDFSV…RIYGYDKIES (76 aa)) is the B5 domain. The Mg(2+) site is built by D474, D480, E483, and E484. One can recognise an FDX-ACB domain in the interval 721 to 814 (SDYQANFRDY…ISQKFQGILR (94 aa)).

The protein belongs to the phenylalanyl-tRNA synthetase beta subunit family. Type 1 subfamily. Tetramer of two alpha and two beta subunits. Mg(2+) is required as a cofactor.

Its subcellular location is the cytoplasm. It catalyses the reaction tRNA(Phe) + L-phenylalanine + ATP = L-phenylalanyl-tRNA(Phe) + AMP + diphosphate + H(+). The protein is Phenylalanine--tRNA ligase beta subunit (pheT) of Rickettsia prowazekii (strain Madrid E).